The following is a 747-amino-acid chain: MLTLTRCHHLKQIAQECLSSLLVKVQSRTQLLLPRASARAESGKSWHSTHSLVGDKNIVLMGPPGSGKTTVGRILGDKLGCCVIDVDSDVLEKAWNMSASEKLQDVGNERFLEEEGKTVLNLSASGSVISLSGSNPMHDASMWHLKKNGIVVYLDVPLTDIISRLKSMRIDRIVGQNTGASLRDSLKHVRLYYKKWYDARVFCESGASAEEVADKVLDVVKRYQDVDSETFISTRHVCLKDHDKKFPPKYFSEAVVEGLASDGGLFVPEKEFPKLSPGEWNNLIGATYIERAQVLLERCIHPADIPAAKLGEMIETAYGENFACSKVAPVRHLSGNQFILELFYGPTGSFKDLSLQLMPHIFAYCIPPGCNYVILVATSGDTGSAVLNGFSHLNKNDKERIAVVTFFPENGVSDFQKAEIIGSQRENGWAIGVRSDFDFCQTAIRKIFNDSDFTGFLAVEYGTILSSANSINWARLLPQIVYHASAYLELVNQRFISFGSPVDVCVPTGNFGNVLAAVYAKMMGIPIRKFICASNQNHVLTDFIKTGHYDLRNRKLAQTFSPSIDILKSSNLERHLYLMANKDGQLMANLYHQLESQLHFRIEKMLVEKLQQEFVADWCSEGECLAAISTTYNASGYILDPHTAVAKVVADKMQDKSCPVLIASTAHYSKFAPAIMQALGIKELNQTSSSQLYLLSSYNALPPPHEALLERMKQKEKMDYQVCVADVDVLKSHAEKLIQNWFVRKSE.

At K351 the chain carries N6-(pyridoxal phosphate)lysine.

This sequence belongs to the threonine synthase family. Pyridoxal 5'-phosphate serves as cofactor.

The sequence is that of Threonine synthase-like 1 (Thnsl1) from Mus musculus (Mouse).